The following is a 740-amino-acid chain: Ethylene receptor 1 (740 aa).

The next 3 membrane-spanning stretches (helical) occupy residues I23–V43, W53–L73, and A95–V115. Cu cation contacts are provided by C65 and H69. Positions D158 to L307 constitute a GAF domain. Residues V350–I587 enclose the Histidine kinase domain. H353 carries the post-translational modification Phosphohistidine; by autocatalysis. Residues K615–L732 enclose the Response regulatory domain. Residue D663 is modified to 4-aspartylphosphate.

The protein belongs to the ethylene receptor family. In terms of assembly, homodimer; disulfide-linked. Cu cation serves as cofactor. Activation probably requires a transfer of a phosphate group between a His in the transmitter domain and an Asp of the receiver domain.

It is found in the endoplasmic reticulum membrane. It carries out the reaction ATP + protein L-histidine = ADP + protein N-phospho-L-histidine.. Its function is as follows. May act early in the ethylene signal transduction pathway, possibly as an ethylene receptor, or as a regulator of the pathway. The protein is Ethylene receptor 1 (ETR1) of Pelargonium hortorum (Common geranium).